A 932-amino-acid chain; its full sequence is RNA-binding protein 12 (932 aa).

Residues 96–116 are disordered; sequence DIPPANASRSGPPPSSGMSSR. Over residues 98–116 the composition is skewed to low complexity; that stretch reads PPANASRSGPPPSSGMSSR. In terms of domain architecture, RRM 1 spans 304–379; the sequence is LYVSVHGMPF…RYVEVSPATE (76 aa). Residues Ser352 and Ser375 each carry the phosphoserine modification. Composition is skewed to polar residues over residues 392 to 401 and 408 to 417; these read KQNMGPSGQT and LPRSKSPSGQ. The tract at residues 392 to 424 is disordered; it reads KQNMGPSGQTHPPPQTLPRSKSPSGQKRSRSRS. 3 positions are modified to phosphoserine: Ser420, Ser422, and Ser424. An RRM 2 domain is found at 430–507; sequence FCVYLKGLPF…RFIQVHPITK (78 aa). Residue Ser525 is modified to Phosphoserine. Positions 717–734 are enriched in low complexity; it reads NGPPFNFPGNFGGSNAFG. The interval 717–853 is disordered; the sequence is NGPPFNFPGN…PGFASSSGKP (137 aa). Positions 783 to 811 are enriched in gly residues; it reads SGFGGGPQNFGNGPGSLGGPPGFGSGPPG. The segment covering 824–836 has biased composition (pro residues); that stretch reads AFGPGPGPGPGPG. Residues 856 to 932 enclose the RRM 3 domain; it reads TVIKVQNMPF…GSRKVKLVLG (77 aa).

The protein localises to the nucleus. The sequence is that of RNA-binding protein 12 (RBM12) from Homo sapiens (Human).